The sequence spans 463 residues: METEQPEETFPNTETNGEFGKRPAEDMEEEQAFKRSRNTDEMVELRILLQSKNAGAVIGKGGKNIKALRTDYNASVSVPDSSGPERILSISADIETIGEILKKIIPTLEEGLQLPSPTATSQLPLESDAVECLNYQHFKGSDFDCELRLLIHQSLAGGIIGVKGAKIKELRENTQTTIKLFQECCPHSTDRVVLIGGKPDRVVECIKIILDLISESPIKGRAQPYDPNFYDETYDYGGFTMMFDDRRGRPVGFPMRGRGGFDRMPPGRGGRPMPPSRRDYDDMSPRRGPPPPPPGRGGRGGSRARNLPLPPPPPPRGGDLMAYDRRGRPGDRYDGMVGFSADETWDSAIDTWSPSEWQMAYEPQGGSGYDYSYAGGRGSYGDLGGPIITTQVTIPKDLAGSIIGKGGQRIKQIRHESGASIKIDEPLEGSEDRIITITGTQDQIQNAQYLLQNSVKQYSGKFF.

N-acetylmethionine is present on M1. Residues 1-37 (METEQPEETFPNTETNGEFGKRPAEDMEEEQAFKRSR) form a disordered region. Residues 1–276 (METEQPEETF…GRGGRPMPPS (276 aa)) are necessary for interaction with DDX1. The span at 19–37 (FGKRPAEDMEEEQAFKRSR) shows a compositional bias: basic and acidic residues. K34 carries the N6-acetyllysine; alternate modification. K34 is covalently cross-linked (Glycyl lysine isopeptide (Lys-Gly) (interchain with G-Cter in SUMO1); alternate). A Glycyl lysine isopeptide (Lys-Gly) (interchain with G-Cter in SUMO2); alternate cross-link involves residue K34. Phosphoserine is present on S36. T39 is modified (phosphothreonine). Residues 42-104 (MVELRILLQS…ETIGEILKKI (63 aa)) enclose the KH 1 domain. Residues K52 and K60 each participate in a glycyl lysine isopeptide (Lys-Gly) (interchain with G-Cter in SUMO2) cross-link. Tandem repeats lie at residues 54 to 76 (AGAVIGKGGKNIKALRTDYNASV) and 59 to 62 (GKGG). The interval 54 to 421 (AGAVIGKGGK…QIRHESGASI (368 aa)) is 2 X 22 AA approximate repeats. Positions 59–407 (GKGGKNIKAL…LAGSIIGKGG (349 aa)) are 5 X 4 AA repeats of G-X-G-G. Phosphoserine occurs at positions 75 and 116. In terms of domain architecture, KH 2 spans 144–209 (DCELRLLIHQ…DRVVECIKII (66 aa)). Residue K163 forms a Glycyl lysine isopeptide (Lys-Gly) (interchain with G-Cter in SUMO1); alternate linkage. K163 is covalently cross-linked (Glycyl lysine isopeptide (Lys-Gly) (interchain with G-Cter in SUMO2); alternate). The residue at position 198 (K198) is an N6-acetyllysine. The segment at 209 to 337 (ILDLISESPI…RPGDRYDGMV (129 aa)) is interaction with ZIK1. S214 and S216 each carry phosphoserine. K219 participates in a covalent cross-link: Glycyl lysine isopeptide (Lys-Gly) (interchain with G-Cter in SUMO2); alternate. K219 bears the N6-succinyllysine; alternate mark. The segment at 236 to 273 (YGGFTMMFDDRRGRPVGFPMRGRGGFDRMPPGRGGRPM) is RNA-binding RGG-box. Tandem repeats lie at residues 245 to 250 (DRRGRP), 257 to 260 (GRGG), and 267 to 270 (GRGG). The 2 X 6 AA repeats of D-R-R-G-R-P stretch occupies residues 245 to 329 (DRRGRPVGFP…LMAYDRRGRP (85 aa)). The tract at residues 250-329 (PVGFPMRGRG…LMAYDRRGRP (80 aa)) is disordered. Residues 252 to 266 (GFPMRGRGGFDRMPP) show a composition bias toward low complexity. The segment covering 276 to 285 (SRRDYDDMSP) has biased composition (basic and acidic residues). Position 284 is a phosphoserine (S284). One copy of the 3-4 repeat lies at 295-298 (GRGG). R316 is modified (omega-N-methylarginine). One copy of the 2-2 repeat lies at 324-329 (DRRGRP). The residue at position 377 (R377) is an Omega-N-methylarginine. The residue at position 379 (S379) is a Phosphoserine. Residue Y380 is modified to Phosphotyrosine. Residues 387-451 (IITTQVTIPK…DQIQNAQYLL (65 aa)) enclose the KH 3 domain. Tandem repeats lie at residues 399-421 (AGSIIGKGGQRIKQIRHESGASI) and 404-407 (GKGG). K405 is subject to N6-acetyllysine; alternate. K405 participates in a covalent cross-link: Glycyl lysine isopeptide (Lys-Gly) (interchain with G-Cter in SUMO2); alternate. The residue at position 420 (S420) is a Phosphoserine. K422 is covalently cross-linked (Glycyl lysine isopeptide (Lys-Gly) (interchain with G-Cter in SUMO1); alternate). Residue K422 forms a Glycyl lysine isopeptide (Lys-Gly) (interchain with G-Cter in SUMO2); alternate linkage. A Glycyl lysine isopeptide (Lys-Gly) (interchain with G-Cter in SUMO); alternate cross-link involves residue K422.

Identified in the spliceosome C complex. Interacts with ANKRD28, RBM42 and ZIK1. Interacts with DDX1. Interacts with MDM2; this interaction leads to ubiquitination and proteasomal degradation. Interacts with p53/TP53. Interacts with BRDT. Interacts with IVNS1ABP. Interacts with PPIA/CYPA. Part of a transcription inhibitory ribonucleoprotein complex composed at least of the circular RNA circZNF827, ZNF827 and HNRNPL. In terms of processing, sumoylated by CBX4. Sumoylation is increased upon DNA damage, such as that produced by doxorubicin, etoposide, UV light and camptothecin, due to enhanced CBX4 phosphorylation by HIPK2 under these conditions. Post-translationally, ubiquitinated by MDM2. Doxorubicin treatment does not affect monoubiquitination, but slightly decreases HNRNPK poly-ubiquitination. O-glycosylated (O-GlcNAcylated), in a cell cycle-dependent manner.

The protein localises to the cytoplasm. The protein resides in the nucleus. It is found in the nucleoplasm. Its subcellular location is the cell projection. It localises to the podosome. One of the major pre-mRNA-binding proteins. Binds tenaciously to poly(C) sequences. Likely to play a role in the nuclear metabolism of hnRNAs, particularly for pre-mRNAs that contain cytidine-rich sequences. Can also bind poly(C) single-stranded DNA. Plays an important role in p53/TP53 response to DNA damage, acting at the level of both transcription activation and repression. When sumoylated, acts as a transcriptional coactivator of p53/TP53, playing a role in p21/CDKN1A and 14-3-3 sigma/SFN induction. As far as transcription repression is concerned, acts by interacting with long intergenic RNA p21 (lincRNA-p21), a non-coding RNA induced by p53/TP53. This interaction is necessary for the induction of apoptosis, but not cell cycle arrest. As part of a ribonucleoprotein complex composed at least of ZNF827, HNRNPL and the circular RNA circZNF827 that nucleates the complex on chromatin, may negatively regulate the transcription of genes involved in neuronal differentiation. This is Heterogeneous nuclear ribonucleoprotein K (HNRNPK) from Oryctolagus cuniculus (Rabbit).